A 495-amino-acid polypeptide reads, in one-letter code: Muscle LIM protein Mlp84B (495 aa).

An LIM zinc-binding 1 domain is found at 12–63; that stretch reads CPRCGKSVYAAEERLAGGYVFHKNCFKCGMCNKSLDSTNCTEHERELYCKTC. The short motif at 66 to 71 is the Nuclear localization signal element; that stretch reads RKFGPK. The LIM zinc-binding 2 domain occupies 120 to 172; that stretch reads CPRCGGYVYAAEQMLARGRSWHKECFKCGTCKKGLDSILCCEAPDKNIYCKGC. A Nuclear localization signal motif is present at residues 175 to 180; that stretch reads KKFGPK. 3 LIM zinc-binding domains span residues 222-274, 325-377, and 421-473; these read CPRC…CRTC and CPRC…CRAC.

In terms of tissue distribution, in the embryo, expression is restricted to the somatic, visceral, and pharyngeal muscles. Within the somatic musculature, expression is localized at the ends of muscles fibers at the point of attachment to the epidermis (at protein level). There is no expression in cardiac mesoderm or in fat body.

The protein localises to the cytoplasm. The protein resides in the nucleus. Its function is as follows. Plays a role in cell differentiation late in myogenesis. Transcription factor Mef2 is essential for expression. The protein is Muscle LIM protein Mlp84B of Drosophila melanogaster (Fruit fly).